The sequence spans 380 residues: Alcohol dehydrogenase 1 (380 aa).

Cys48, Thr50, His70, Cys100, Cys103, Cys106, Cys114, and Cys178 together coordinate Zn(2+). Residues Thr50 and His70 each contribute to the an alcohol site. Thr50 is an NAD(+) binding site. NAD(+) contacts are provided by residues 203 to 208 (GLGAVG), Asp227, Arg232, Thr273, Val296, 296 to 298 (VGV), Phe323, and Arg373.

Belongs to the zinc-containing alcohol dehydrogenase family. In terms of assembly, homodimer. Homotetramer. Requires Zn(2+) as cofactor.

Its subcellular location is the cytoplasm. The catalysed reaction is a primary alcohol + NAD(+) = an aldehyde + NADH + H(+). It carries out the reaction a secondary alcohol + NAD(+) = a ketone + NADH + H(+). The chain is Alcohol dehydrogenase 1 (ADH1) from Solanum tuberosum (Potato).